The chain runs to 222 residues: Probable GTP-binding protein EngB (222 aa).

The 195-residue stretch at 23-217 folds into the EngB-type G domain; the sequence is NASEIVFLGR…REEIVKYTLG (195 aa). GTP is bound by residues 31–38, 57–61, 82–85, 152–155, and 191–193; these read GRSNVGKS, GKTQL, DLPG, TKAD, and FSA. Mg(2+)-binding residues include serine 38 and threonine 59.

It belongs to the TRAFAC class TrmE-Era-EngA-EngB-Septin-like GTPase superfamily. EngB GTPase family. Mg(2+) serves as cofactor.

Its function is as follows. Necessary for normal cell division and for the maintenance of normal septation. This Helicobacter hepaticus (strain ATCC 51449 / 3B1) protein is Probable GTP-binding protein EngB.